A 244-amino-acid chain; its full sequence is Small ribosomal subunit protein eS4 (244 aa).

Positions 43-106 (LPLLLVVRDV…DENYLVLFDE (64 aa)) constitute an S4 RNA-binding domain.

The protein belongs to the eukaryotic ribosomal protein eS4 family.

This is Small ribosomal subunit protein eS4 from Methanococcus maripaludis (strain C7 / ATCC BAA-1331).